We begin with the raw amino-acid sequence, 431 residues long: Histidinol dehydrogenase (431 aa).

Residues Y127, Q189, and N212 each coordinate NAD(+). Substrate-binding residues include S237, Q259, and H262. The Zn(2+) site is built by Q259 and H262. Catalysis depends on proton acceptor residues E326 and H327. Substrate is bound by residues H327, D360, E414, and H419. D360 provides a ligand contact to Zn(2+). Residue H419 participates in Zn(2+) binding.

Belongs to the histidinol dehydrogenase family. The cofactor is Zn(2+).

The catalysed reaction is L-histidinol + 2 NAD(+) + H2O = L-histidine + 2 NADH + 3 H(+). It functions in the pathway amino-acid biosynthesis; L-histidine biosynthesis; L-histidine from 5-phospho-alpha-D-ribose 1-diphosphate: step 9/9. Its function is as follows. Catalyzes the sequential NAD-dependent oxidations of L-histidinol to L-histidinaldehyde and then to L-histidine. This Xylella fastidiosa (strain Temecula1 / ATCC 700964) protein is Histidinol dehydrogenase.